A 448-amino-acid chain; its full sequence is ATP-dependent protease ATPase subunit HslU (448 aa).

Residues isoleucine 18, glycine 60–glutamate 65, aspartate 261, glutamate 326, and arginine 398 each bind ATP.

The protein belongs to the ClpX chaperone family. HslU subfamily. A double ring-shaped homohexamer of HslV is capped on each side by a ring-shaped HslU homohexamer. The assembly of the HslU/HslV complex is dependent on binding of ATP.

The protein localises to the cytoplasm. Functionally, ATPase subunit of a proteasome-like degradation complex; this subunit has chaperone activity. The binding of ATP and its subsequent hydrolysis by HslU are essential for unfolding of protein substrates subsequently hydrolyzed by HslV. HslU recognizes the N-terminal part of its protein substrates and unfolds these before they are guided to HslV for hydrolysis. This chain is ATP-dependent protease ATPase subunit HslU, found in Paraburkholderia phytofirmans (strain DSM 17436 / LMG 22146 / PsJN) (Burkholderia phytofirmans).